Reading from the N-terminus, the 599-residue chain is Nucleoporin p58/p45 (599 aa).

Repeat copies occupy residues 7–8 (FG), 30–31 (FG), 44–45 (FG), 63–64 (FG), and 68–69 (FG). The segment at 7-579 (FGSGTLGSTT…VSNPASAGFG (573 aa)) is 14 X 2 AA repeats of F-G. The disordered stretch occupies residues 213–247 (NEGLGGIDFSSSSDKKSDKTGTRPEDSKALKDENL). The span at 225–246 (SDKKSDKTGTRPEDSKALKDEN) shows a compositional bias: basic and acidic residues. Coiled-coil stretches lie at residues 256–276 (ENLQ…SRMS) and 314–381 (ETAQ…SHIT). A Phosphothreonine modification is found at T331. 9 consecutive repeat copies span residues 488–489 (FG), 492–493 (FG), 513–514 (FG), 519–520 (FG), 529–530 (FG), 531–532 (FG), 545–546 (FG), 568–569 (FG), and 578–579 (FG). Positions 579–599 (GTGGQLLQLKKPPAGNKRGKR) are disordered.

Belongs to the NUP58 family. Component of the p62 complex, a complex at least composed of NUP62, NUP54, and NUP58. Interacts with NUTF2. Interacts with SRP1-alpha and Importin p97 proteins when they are together, but not with SRP1-alpha protein alone. In terms of processing, O-glycosylated.

The protein resides in the nucleus. The protein localises to the nuclear pore complex. It localises to the nucleus membrane. Functionally, component of the nuclear pore complex, a complex required for the trafficking across the nuclear membrane. The chain is Nucleoporin p58/p45 from Homo sapiens (Human).